We begin with the raw amino-acid sequence, 247 residues long: ATP synthase subunit a, chloroplastic (247 aa).

The next 5 helical transmembrane spans lie at 38-58 (QVLITSWVVIAILLGSAIIAV), 95-115 (VPFIGTMFLFIFVSNWSGALL), 134-154 (INTTVALALLTSVAYFYAGLT), 199-219 (LVVVVLVSLVPLVVPIPVMFL), and 220-240 (GLFTSGIQALIFATLAAAYIG).

The protein belongs to the ATPase A chain family. F-type ATPases have 2 components, CF(1) - the catalytic core - and CF(0) - the membrane proton channel. CF(1) has five subunits: alpha(3), beta(3), gamma(1), delta(1), epsilon(1). CF(0) has four main subunits: a, b, b' and c.

It localises to the plastid. The protein localises to the chloroplast thylakoid membrane. In terms of biological role, key component of the proton channel; it plays a direct role in the translocation of protons across the membrane. This chain is ATP synthase subunit a, chloroplastic, found in Carica papaya (Papaya).